Consider the following 273-residue polypeptide: Urease accessory protein UreD (273 aa).

A disordered region spans residues 1–29; the sequence is MLMRTATPLDQPRAIGSARVSSKRVNGGS.

Belongs to the UreD family. As to quaternary structure, ureD, UreF and UreG form a complex that acts as a GTP-hydrolysis-dependent molecular chaperone, activating the urease apoprotein by helping to assemble the nickel containing metallocenter of UreC. The UreE protein probably delivers the nickel.

The protein localises to the cytoplasm. Required for maturation of urease via the functional incorporation of the urease nickel metallocenter. The protein is Urease accessory protein UreD of Roseobacter denitrificans (strain ATCC 33942 / OCh 114) (Erythrobacter sp. (strain OCh 114)).